The chain runs to 695 residues: Electrogenic aspartate/glutamate antiporter Aralar, mitochondrial (695 aa).

The segment at 1–310 is N-terminal domain; the sequence is MPMHIPFPFN…DYSDLSNIAP (310 aa). Residues 2 to 345 lie on the Mitochondrial intermembrane side of the membrane; the sequence is PMHIPFPFNW…FIQVLESSYR (344 aa). EF-hand domains follow at residues 71–104, 105–140, 142–175, and 176–211; these read FNDESVRLLANIADTSKDGLISFSEFQAFEGLLC, TPDALYRTAFQLFDRKGNGTVSYADFADVVQKTELH, KIPFSLDGPFIKRYFGDKKQRLINYAEFTQLLHD, and FHEEHAMEAFRSKDPAGTGFISPLDFQDIIVNVKRH. The Ca(2+) site is built by D84, S86, D88, L90, E95, D118, N122, T124, and D129. Positions 189, 193, and 200 each coordinate Ca(2+). The interval 311 to 327 is linker loop domain; sequence EHYTKHMTHRLAEIKAV. Residues 336–627 form a carrier domain region; sequence FIQVLESSYR…RLFYVDFGGT (292 aa). Solcar repeat units follow at residues 340-431, 439-523, and 531-619; these read LESS…VRDK, IPTW…TKAM, and NHPL…LQRL. A helical membrane pass occupies residues 346–363; that stretch reads FTLGSFAGAVGATVVYPI. Topologically, residues 364 to 405 are mitochondrial matrix; sequence DLVKTRMQNQRAGSYIGEVAYRNSWDCFKKVVRHEGFMGLYR. Residues 406–425 traverse the membrane as a helical segment; that stretch reads GLLPQLMGVAPEKAIKLTVN. Residues 426–448 are Mitochondrial intermembrane-facing; that stretch reads DLVRDKLTDKKGNIPTWAEVLAG. A helical membrane pass occupies residues 449-462; it reads GCAGASQVVFTNPL. Topologically, residues 463 to 497 are mitochondrial matrix; sequence EIVKIRLQVAGEIASGSKIRAWSVVRELGLFGLYK. A helical membrane pass occupies residues 498–517; the sequence is GARACLLRDVPFSAIYFPTY. Over 518 to 536 the chain is Mitochondrial intermembrane; sequence AHTKAMMADKDGYNHPLTL. A helical transmembrane segment spans residues 537–554; it reads LAAGAIAGVPAASLVTPA. Residues 555–593 are Mitochondrial matrix-facing; sequence DVIKTRLQVVARSGQTTYTGVWDATKKIMAEEGPRAFWK. The chain crosses the membrane as a helical span at residues 594–613; it reads GTAARVFRSSPQFGVTLVTY. At 614 to 695 the chain is on the mitochondrial intermembrane side; that stretch reads ELLQRLFYVD…AASPSTATGS (82 aa). The interval 628 to 695 is C-terminal domain; it reads QPKGSEAHKI…AASPSTATGS (68 aa).

Belongs to the mitochondrial carrier (TC 2.A.29) family. As to quaternary structure, homodimer (via N-terminus). Ca(2+) is required as a cofactor. As to expression, expressed throughout the body in both males and females, including in ovaries and testes. Specifically expressed in female ovaries. In terms of tissue distribution, expressed throughout the body in both males and females but absent from ovaries and testes.

It is found in the mitochondrion inner membrane. The catalysed reaction is L-aspartate(in) + L-glutamate(out) + H(+)(out) = L-aspartate(out) + L-glutamate(in) + H(+)(in). The enzyme catalyses 3-sulfino-L-alanine(out) + L-glutamate(in) + H(+)(in) = 3-sulfino-L-alanine(in) + L-glutamate(out) + H(+)(out). It carries out the reaction L-2-aminoadipate(in) + L-glutamate(out) + H(+)(out) = L-2-aminoadipate(out) + L-glutamate(in) + H(+)(in). It catalyses the reaction L-glutamine(in) + L-glutamate(out) + Na(+)(out) + H(+)(out) = L-glutamine(out) + L-glutamate(in) + Na(+)(in) + H(+)(in). With respect to regulation, activated by Ca(2+). Inhibited by p-chloromercuribenzoate, pyrocarbonate, mersalyl, tannic acid and N-ethylmaleimide. Its function is as follows. Mitochondrial electrogenic aspartate/glutamate antiporter that favors efflux of aspartate and entry of glutamate and proton within the mitochondria as part of the malate-aspartate shuttle. Also mediates the exchange of L-cysteinesulfinate (3-sulfino-L-alanine) for L-glutamate. Necessary for gamma-aminobutyric acid (GABA) uptake in brain mitochondria in response to increased mitochondrial membrane polarization; does not possess detectable GABA transport activity but role may be indirect. Functionally, possesses transport activity towards L-aspartate, L-glutamate and L-cysteinesulfinate (3-sulfino-L-alanine). L-glutamine transport activity is undetectable. GABA transport activity is undetectable. In terms of biological role, possesses transport activity towards L-aspartate, L-glutamate and L-cysteinesulfinate (3-sulfino-L-alanine). Has a wider substrate specificity range that includes L-2-aminoadipate and L-glutamine. GABA transport activity is undetectable. This is Electrogenic aspartate/glutamate antiporter Aralar, mitochondrial from Drosophila melanogaster (Fruit fly).